A 142-amino-acid chain; its full sequence is Sec-independent protein translocase protein TatB (142 aa).

Residues 2-22 traverse the membrane as a helical segment; it reads FANVGWGEMLVLVIAGLVILG. The segment at 89–142 is disordered; the sequence is DDSIFTGKFDQNGKSEKPEQKPEKPQSAPGPAAAVPDQPAGGRSGSTPYDTDAT. Positions 99-112 are enriched in basic and acidic residues; that stretch reads QNGKSEKPEQKPEK. Over residues 133–142 the composition is skewed to polar residues; it reads GSTPYDTDAT.

This sequence belongs to the TatB family. The Tat system comprises two distinct complexes: a TatABC complex, containing multiple copies of TatA, TatB and TatC subunits, and a separate TatA complex, containing only TatA subunits. Substrates initially bind to the TatABC complex, which probably triggers association of the separate TatA complex to form the active translocon.

Its subcellular location is the cell membrane. Functionally, part of the twin-arginine translocation (Tat) system that transports large folded proteins containing a characteristic twin-arginine motif in their signal peptide across membranes. Together with TatC, TatB is part of a receptor directly interacting with Tat signal peptides. TatB may form an oligomeric binding site that transiently accommodates folded Tat precursor proteins before their translocation. This chain is Sec-independent protein translocase protein TatB, found in Mycolicibacterium vanbaalenii (strain DSM 7251 / JCM 13017 / BCRC 16820 / KCTC 9966 / NRRL B-24157 / PYR-1) (Mycobacterium vanbaalenii).